The chain runs to 216 residues: Probable GTP-binding protein EngB (216 aa).

The 178-residue stretch at 37 to 214 folds into the EngB-type G domain; that stretch reads GSVEIAFAGR…RAAMIRLLDE (178 aa). GTP is bound by residues 45–52, 72–76, 92–95, 159–162, and 193–195; these read GRSNVGKS, GRTQE, DMPG, TKAD, and TSS. Positions 52 and 74 each coordinate Mg(2+).

The protein belongs to the TRAFAC class TrmE-Era-EngA-EngB-Septin-like GTPase superfamily. EngB GTPase family. Mg(2+) is required as a cofactor.

In terms of biological role, necessary for normal cell division and for the maintenance of normal septation. The protein is Probable GTP-binding protein EngB of Rhodopseudomonas palustris (strain ATCC BAA-98 / CGA009).